The following is a 310-amino-acid chain: uncharacterized protein (310 aa).

Disordered regions lie at residues 22-163 (LARQ…PVEH) and 178-209 (EAEA…VEGD). 2 stretches are compositionally biased toward basic and acidic residues: residues 56-66 (IIRDDHHHAGP) and 183-197 (TEVR…ERHA). Positions 198–209 (AAAAAGTDVEGD) are enriched in low complexity. 3 helical membrane-spanning segments follow: residues 231–251 (ALVV…FIAF), 257–277 (WNSI…VVSV), and 286–306 (IAST…PLAL).

It to M.leprae ML2433.

The protein localises to the cell membrane. This is an uncharacterized protein from Mycobacterium tuberculosis (strain CDC 1551 / Oshkosh).